A 72-amino-acid chain; its full sequence is Translation initiation factor IF-1 (72 aa).

Residues 1–72 (MAKEEAIEIE…TKGRITYRYK (72 aa)) form the S1-like domain.

This sequence belongs to the IF-1 family. Component of the 30S ribosomal translation pre-initiation complex which assembles on the 30S ribosome in the order IF-2 and IF-3, IF-1 and N-formylmethionyl-tRNA(fMet); mRNA recruitment can occur at any time during PIC assembly.

It localises to the cytoplasm. In terms of biological role, one of the essential components for the initiation of protein synthesis. Stabilizes the binding of IF-2 and IF-3 on the 30S subunit to which N-formylmethionyl-tRNA(fMet) subsequently binds. Helps modulate mRNA selection, yielding the 30S pre-initiation complex (PIC). Upon addition of the 50S ribosomal subunit IF-1, IF-2 and IF-3 are released leaving the mature 70S translation initiation complex. The polypeptide is Translation initiation factor IF-1 (Chlorobium phaeobacteroides (strain DSM 266 / SMG 266 / 2430)).